Consider the following 519-residue polypeptide: MKAFLLTLLAQLCSASLVPEREKDPEYWRQQAQETLRDALRLQHLNQNVAKNLILFLGDGMGVSTVTAARILKGQLQHRKGEESLLEMDKFPYVALAKTYNTNAQVPDSAGTATAYLCGVKANEGTVGVSAGVTRDRCNTTKGQEVTSILRWAKDEGKAVGIVTTTRVTHATPSAAYAHSANRDWYSDGEMPLDALEGGCKDIARQLVDNIPDIEVILGGGRKYMFPKNTSDVEYPQEERHRGTRLDGKDLVQAWHDTKPAGKVAKYVWHRRELLALNVSRVDFLLGLFEPGDMVYELDRNNETDPSLSEMVAVAIRMLQKNPRGFFLLVEGGRIDHGHHEGKAKQALHEAVELDRAVGLAGRLTSPRDTLSVVTADHSHVFTFGGYTPRGNPIFGLAPMQSDVDRKPFTSILYGNGPGYKIVGGERENVSAVDFAHANYQAQAAVPLRQETHGGEDVAVFARGPMAHLLHGVDEQNYIPHAMAYAACIGPNRAHCSSAARPAATATLLPVLLLLLLLC.

The first 16 residues, 1–16 (MKAFLLTLLAQLCSAS), serve as a signal peptide directing secretion. Residue Asp-59 coordinates Mg(2+). 2 residues coordinate Zn(2+): Asp-59 and Ser-109. The active-site Phosphoserine intermediate is the Ser-109. Cys-138 and Cys-200 are oxidised to a cystine. N-linked (GlcNAc...) asparagine glycosylation occurs at Asn-139. Residue Thr-172 participates in Mg(2+) binding. A glycan (N-linked (GlcNAc...) asparagine) is linked at Asn-229. Glu-234 contacts Ca(2+). An N-linked (GlcNAc...) asparagine glycan is attached at Asn-278. Ca(2+) contacts are provided by Phe-289 and Glu-290. Residue Asn-302 is glycosylated (N-linked (GlcNAc...) asparagine). Asp-305 contacts Ca(2+). Glu-331 is a binding site for Mg(2+). Residues Asp-336, His-340, Asp-377, and His-378 each coordinate Zn(2+). Asn-429 carries an N-linked (GlcNAc...) asparagine glycan. His-453 serves as a coordination point for Zn(2+). Cysteines 488 and 496 form a disulfide. The GPI-anchor amidated serine moiety is linked to residue Ser-498. A propeptide spans 499-519 (AARPAATATLLPVLLLLLLLC) (removed in mature form).

The protein belongs to the alkaline phosphatase family. Homodimer. The cofactor is Mg(2+). Requires Zn(2+) as cofactor. Ca(2+) is required as a cofactor.

The protein localises to the cell membrane. The protein resides in the extracellular vesicle membrane. The catalysed reaction is a phosphate monoester + H2O = an alcohol + phosphate. It catalyses the reaction diphosphate + H2O = 2 phosphate + H(+). It carries out the reaction pyridoxal 5'-phosphate + H2O = pyridoxal + phosphate. The enzyme catalyses phosphoethanolamine + H2O = ethanolamine + phosphate. The catalysed reaction is ATP + H2O = ADP + phosphate + H(+). It catalyses the reaction ADP + H2O = AMP + phosphate + H(+). It carries out the reaction AMP + H2O = adenosine + phosphate. Its function is as follows. Alkaline phosphatase that metabolizes various phosphate compounds and plays a key role in skeletal mineralization and adaptive thermogenesis. Has broad substrate specificity and can hydrolyze a considerable variety of compounds: however, only a few substrates, such as diphosphate (inorganic pyrophosphate; PPi) and pyridoxal 5'-phosphate (PLP) are natural substrates. Plays an essential role in skeletal and dental mineralization via its ability to hydrolyze extracellular diphosphate, a potent mineralization inhibitor, to phosphate: it thereby promotes hydroxyapatite crystal formation and increases inorganic phosphate concentration. Catalyzes dephosphorylation of PLP to pyridoxal (PL), the transportable form of vitamin B6, in order to provide a sufficient amount of PLP in the brain, an essential cofactor for enzymes catalyzing the synthesis of diverse neurotransmitters. Additionally, also able to mediate ATP degradation in a stepwise manner to adenosine, thereby regulating the availability of ligands for purinergic receptors. Involved in the establishment and growth of feather germs. The polypeptide is Alkaline phosphatase, tissue-nonspecific isozyme (ALPL) (Gallus gallus (Chicken)).